A 254-amino-acid polypeptide reads, in one-letter code: Flavin-dependent thymidylate synthase (254 aa).

One can recognise a ThyX domain in the interval L7–Y237. Residues S71, R95–R97, and Q103 each bind FAD. DUMP-binding positions include E92–R95, Q103–R107, and R176. The short motif at R95 to S105 is the ThyX motif element. Residues N192–R194 and H198 each bind FAD. R203 contacts dUMP. Residue R203 is the Involved in ionization of N3 of dUMP, leading to its activation of the active site.

This sequence belongs to the thymidylate synthase ThyX family. As to quaternary structure, homotetramer. FAD serves as cofactor.

The catalysed reaction is dUMP + (6R)-5,10-methylene-5,6,7,8-tetrahydrofolate + NADPH + H(+) = dTMP + (6S)-5,6,7,8-tetrahydrofolate + NADP(+). Its pathway is pyrimidine metabolism; dTTP biosynthesis. Catalyzes the reductive methylation of 2'-deoxyuridine-5'-monophosphate (dUMP) to 2'-deoxythymidine-5'-monophosphate (dTMP) while utilizing 5,10-methylenetetrahydrofolate (mTHF) as the methyl donor, and NADPH and FADH(2) as the reductant. This is Flavin-dependent thymidylate synthase from Mycobacterium sp. (strain KMS).